We begin with the raw amino-acid sequence, 1387 residues long: Collagen-like protein 6 (1387 aa).

Residue Asn6 is glycosylated (N-linked (GlcNAc...) asparagine; by host). 6 Collagen-like domains span residues 95–154 (GNNG…KGDI), 161–220 (GDKG…KGDN), 266–325 (GEKG…KGEM), 344–403 (GSKG…KGEK), 450–508 (IKGD…KGDI), and 512–751 (GEKG…SGSS). Disordered regions lie at residues 98 to 219 (GNNG…DKGD), 268 to 422 (KGEI…QNQG), and 454 to 753 (KGEK…SSCQ). Basic and acidic residues-rich tracts occupy residues 114 to 181 (IKGD…KGSK), 189 to 199 (SKGDNGDKGSK), 207 to 219 (SKGD…DKGD), 268 to 340 (KGEI…DGIK), 364 to 382 (KGDR…KGDN), 390 to 405 (SKGD…EKGE), 454 to 535 (KGEK…KGDI), and 544 to 747 (KGEK…DKGE). Asn794, Asn814, Asn819, Asn826, Asn846, Asn886, Asn894, Asn969, Asn1032, Asn1077, Asn1123, Asn1200, Asn1224, Asn1232, and Asn1233 each carry an N-linked (GlcNAc...) asparagine; by host glycan.

May be hydroxylated on lysine by the viral-encoded procollagen-lysine,2-oxoglutarate 5-dioxygenase.

The protein localises to the virion. May participate in the formation of a layer of cross-linked glycosylated fibrils at the viral surface thus giving it a hairy-like appearance. This is Collagen-like protein 6 from Acanthamoeba polyphaga mimivirus (APMV).